Reading from the N-terminus, the 277-residue chain is Type IV methyl-directed restriction enzyme EcoKMcrA (277 aa).

Residues 207–257 (CENCGKNAPFYLNDGNPYLEVHHVIPLSSGGADTTDNCVALCPNCHRELHY) enclose the HNH domain.

In terms of biological role, restriction of 5-methyl and 5-hydroxymethylcytosines at the specific DNA sequence 5'-C(me)CGG-3'. This Escherichia coli (strain K12) protein is Type IV methyl-directed restriction enzyme EcoKMcrA.